The sequence spans 140 residues: MTSPLLESRRQLRKCAFQALMSLEFGTDVETACRFAYTHDREDTDVQLPAFLIDLVSGVQAKKEELDKQITQHLKAGWTIERLTLVERNLLRLGVFEITSFDTPQLVAVNEAIELAKDFSDQKSARFINGLLSQFVTEEQ.

This sequence belongs to the NusB family.

Functionally, involved in transcription antitermination. Required for transcription of ribosomal RNA (rRNA) genes. Binds specifically to the boxA antiterminator sequence of the ribosomal RNA (rrn) operons. This is Transcription antitermination protein NusB from Streptococcus pneumoniae serotype 2 (strain D39 / NCTC 7466).